The chain runs to 257 residues: Transmembrane protein C257L (257 aa).

The next 2 helical transmembrane spans lie at 123-143 and 163-183; these read LELL…FTAL and MMIF…YVLV.

It belongs to the asfivirus C257R family.

The protein localises to the host membrane. It is found in the virion. The protein is Transmembrane protein C257L of African swine fever virus (strain Badajoz 1971 Vero-adapted) (Ba71V).